A 588-amino-acid chain; its full sequence is Serine/threonine-protein kinase CBK1 (588 aa).

2 disordered regions span residues 1–76 (MTDK…HQQQ) and 100–139 (QHQQ…RDRA). The span at 29-42 (LYQQNSNQSNTSLD) shows a compositional bias: polar residues. 2 stretches are compositionally biased toward low complexity: residues 43–76 (QQQQ…HQQQ) and 100–117 (QHQQ…AQQQ). Residues 207–517 (FVTVKVIGKG…ANEIKSHPFF (311 aa)) form the Protein kinase domain. ATP is bound by residues 213-221 (IGKGAFGEV) and Lys236. Asp330 (proton acceptor) is an active-site residue. Residues 370–389 (GTSSNPATQMGPPQNTNRQS) form a disordered region. Residues 518–586 (RGVDWSSIRE…SRFDNMTRRN (69 aa)) form the AGC-kinase C-terminal domain.

Belongs to the protein kinase superfamily. STE Ser/Thr protein kinase family. COT1 subfamily.

It carries out the reaction L-seryl-[protein] + ATP = O-phospho-L-seryl-[protein] + ADP + H(+). The enzyme catalyses L-threonyl-[protein] + ATP = O-phospho-L-threonyl-[protein] + ADP + H(+). Its function is as follows. Protein kinase that seems to play a role in the regulation of cell morphogenesis and proliferation. This chain is Serine/threonine-protein kinase CBK1 (CBK1), found in Yarrowia lipolytica (strain CLIB 122 / E 150) (Yeast).